Consider the following 212-residue polypeptide: MTSFSTSAFRPVAFSLGLLLVMPAAFPAPVTLGEDSKEVAAPNRQLLTSTERIDKHIWYILDGISALRKEICNKSNMCESSKEALAENNLNLPKMAEKDGCFQSGFNEETCLLKITTGLLEFEVYLEYLQNRFESSKEQAGAVQMSTKGLIQSLQRKAKNLSAIATPDPATNASLLTKLQAQDQWLQGVTTHLILRSFKEFLQCSLRALRQM.

The N-terminal stretch at 1–29 (MTSFSTSAFRPVAFSLGLLLVMPAAFPAP) is a signal peptide. C72 and C78 are joined by a disulfide. N73 carries N-linked (GlcNAc...) asparagine glycosylation. A Phosphoserine modification is found at S81. Residues C101 and C111 are joined by a disulfide bond. N-linked (GlcNAc...) asparagine glycosylation is found at N160 and N172.

The protein belongs to the IL-6 superfamily. Component of a hexamer of two molecules each of IL6, IL6R and IL6ST; first binds to IL6R to associate with the signaling subunit IL6ST. Interacts with IL6R (via the N-terminal ectodomain); this interaction may be affected by IL6R-binding with SORL1, hence decreasing IL6 cis signaling. Interacts with SORL1 (via the N-terminal ectodomain); this interaction leads to IL6 internalization and lysosomal degradation. May form a trimeric complex with the soluble SORL1 ectodomain and soluble IL6R receptor; this interaction might stabilize circulating IL6, hence promoting IL6 trans signaling.

It localises to the secreted. Cytokine with a wide variety of biological functions in immunity, tissue regeneration, and metabolism. Binds to IL6R, then the complex associates to the signaling subunit IL6ST/gp130 to trigger the intracellular IL6-signaling pathway. The interaction with the membrane-bound IL6R and IL6ST stimulates 'classic signaling', whereas the binding of IL6 and soluble IL6R to IL6ST stimulates 'trans-signaling'. Alternatively, 'cluster signaling' occurs when membrane-bound IL6:IL6R complexes on transmitter cells activate IL6ST receptors on neighboring receiver cells. Functionally, IL6 is a potent inducer of the acute phase response. Rapid production of IL6 contributes to host defense during infection and tissue injury, but excessive IL6 synthesis is involved in disease pathology. In the innate immune response, is synthesized by myeloid cells, such as macrophages and dendritic cells, upon recognition of pathogens through toll-like receptors (TLRs) at the site of infection or tissue injury. In the adaptive immune response, is required for the differentiation of B cells into immunoglobulin-secreting cells. Plays a major role in the differentiation of CD4(+) T cell subsets. Essential factor for the development of T follicular helper (Tfh) cells that are required for the induction of germinal-center formation. Required to drive naive CD4(+) T cells to the Th17 lineage. Also required for proliferation of myeloma cells and the survival of plasmablast cells. In terms of biological role, acts as an essential factor in bone homeostasis and on vessels directly or indirectly by induction of VEGF, resulting in increased angiogenesis activity and vascular permeability. Induces, through 'trans-signaling' and synergistically with IL1B and TNF, the production of VEGF. Involved in metabolic controls, is discharged into the bloodstream after muscle contraction increasing lipolysis and improving insulin resistance. 'Trans-signaling' in central nervous system also regulates energy and glucose homeostasis. Mediates, through GLP-1, crosstalk between insulin-sensitive tissues, intestinal L cells and pancreatic islets to adapt to changes in insulin demand. Also acts as a myokine. Plays a protective role during liver injury, being required for maintenance of tissue regeneration. Also has a pivotal role in iron metabolism by regulating HAMP/hepcidin expression upon inflammation or bacterial infection. Through activation of IL6ST-YAP-NOTCH pathway, induces inflammation-induced epithelial regeneration. The polypeptide is Interleukin-6 (IL6) (Saimiri sciureus (Common squirrel monkey)).